Reading from the N-terminus, the 86-residue chain is Cell division topological specificity factor (86 aa).

Belongs to the MinE family.

In terms of biological role, prevents the cell division inhibition by proteins MinC and MinD at internal division sites while permitting inhibition at polar sites. This ensures cell division at the proper site by restricting the formation of a division septum at the midpoint of the long axis of the cell. The chain is Cell division topological specificity factor from Stenotrophomonas maltophilia (strain K279a).